A 143-amino-acid polypeptide reads, in one-letter code: Mannitol-specific phosphotransferase enzyme IIA component (143 aa).

A PTS EIIA type-2 domain is found at 2–142 (QVLAKENIKL…EDLIAIFNEV (141 aa)). The active-site Tele-phosphohistidine intermediate is histidine 62. Residue histidine 62 is modified to Phosphohistidine; by HPr. A Phosphoserine modification is found at serine 74.

The protein resides in the cytoplasm. The phosphoenolpyruvate-dependent sugar phosphotransferase system (sugar PTS), a major carbohydrate active transport system, catalyzes the phosphorylation of incoming sugar substrates concomitantly with their translocation across the cell membrane. The enzyme II CmtAB PTS system is involved in D-mannitol transport. The protein is Mannitol-specific phosphotransferase enzyme IIA component (mtlF) of Bacillus subtilis (strain 168).